Reading from the N-terminus, the 151-residue chain is Transcriptional regulator MraZ (151 aa).

SpoVT-AbrB domains are found at residues 5 to 56 and 85 to 128; these read THRH…PLPT and SEEL…DAAR.

Belongs to the MraZ family. In terms of assembly, forms oligomers.

It localises to the cytoplasm. It is found in the nucleoid. In Acidithiobacillus ferrooxidans (strain ATCC 23270 / DSM 14882 / CIP 104768 / NCIMB 8455) (Ferrobacillus ferrooxidans (strain ATCC 23270)), this protein is Transcriptional regulator MraZ.